Here is an 82-residue protein sequence, read N- to C-terminus: Sulfur carrier protein TusA (82 aa).

Cys-17 (cysteine persulfide intermediate) is an active-site residue.

Belongs to the sulfur carrier protein TusA family.

The protein localises to the cytoplasm. Sulfur carrier protein which probably makes part of a sulfur-relay system. This Glaesserella parasuis serovar 5 (strain SH0165) (Haemophilus parasuis) protein is Sulfur carrier protein TusA.